We begin with the raw amino-acid sequence, 555 residues long: Dihydroxy-acid dehydratase (555 aa).

Residue aspartate 78 coordinates Mg(2+). Cysteine 119 serves as a coordination point for [2Fe-2S] cluster. 2 residues coordinate Mg(2+): aspartate 120 and lysine 121. Position 121 is an N6-carboxylysine (lysine 121). Cysteine 191 provides a ligand contact to [2Fe-2S] cluster. Glutamate 444 serves as a coordination point for Mg(2+). Catalysis depends on serine 470, which acts as the Proton acceptor.

The protein belongs to the IlvD/Edd family. As to quaternary structure, homodimer. Requires [2Fe-2S] cluster as cofactor. Mg(2+) serves as cofactor.

It carries out the reaction (2R)-2,3-dihydroxy-3-methylbutanoate = 3-methyl-2-oxobutanoate + H2O. It catalyses the reaction (2R,3R)-2,3-dihydroxy-3-methylpentanoate = (S)-3-methyl-2-oxopentanoate + H2O. It functions in the pathway amino-acid biosynthesis; L-isoleucine biosynthesis; L-isoleucine from 2-oxobutanoate: step 3/4. It participates in amino-acid biosynthesis; L-valine biosynthesis; L-valine from pyruvate: step 3/4. Functions in the biosynthesis of branched-chain amino acids. Catalyzes the dehydration of (2R,3R)-2,3-dihydroxy-3-methylpentanoate (2,3-dihydroxy-3-methylvalerate) into 2-oxo-3-methylpentanoate (2-oxo-3-methylvalerate) and of (2R)-2,3-dihydroxy-3-methylbutanoate (2,3-dihydroxyisovalerate) into 2-oxo-3-methylbutanoate (2-oxoisovalerate), the penultimate precursor to L-isoleucine and L-valine, respectively. In Oleidesulfovibrio alaskensis (strain ATCC BAA-1058 / DSM 17464 / G20) (Desulfovibrio alaskensis), this protein is Dihydroxy-acid dehydratase.